A 692-amino-acid polypeptide reads, in one-letter code: MGTVSSRRSWWPLPLLLLLLLLLGPAGARAQEDEDGDYEELVLALRSEEDGLAEAPEHGTTATFHRCAKDPWRLPGTYVVVLKEETHLSQSERTARRLQAQAARRGYLTKILHVFHGLLPGFLVKMSGDLLELALKLPHVDYIEEDSSVFAQSIPWNLERITPPRYRADEYQPPDGGSLVEVYLLDTSIQSDHREIEGRVMVTDFENVPEEDGTRFHRQASKCDSHGTHLAGVVSGRDAGVAKGASMRSLRVLNCQGKGTVSGTLIGLEFIRKSQLVQPVGPLVVLLPLAGGYSRVLNAACQRLARAGVVLVTAAGNFRDDACLYSPASAPEVITVGATNAQDQPVTLGTLGTNFGRCVDLFAPGEDIIGASSDCSTCFVSQSGTSQAAAHVAGIAAMMLSAEPELTLAELRQRLIHFSAKDVINEAWFPEDQRVLTPNLVAALPPSTHGAGWQLFCRTVWSAHSGPTRMATAVARCAPDEELLSCSSFSRSGKRRGERMEAQGGKLVCRAHNAFGGEGVYAIARCCLLPQANCSIHTAPPAEAGMGTRVHCHQQGHVLTGCSSHWEVEDLGTHKPPMLRPRGQPNQCVGHREASIHASCCRAPGLECKVKEHGIPAPQEQVTVACEEGWTLTGCSALPGTSHVLGAYAVDNTCVVRSRDVSTAGSTSEEAVAAVAICCRSRHLAQASQELQ.

A signal peptide spans 1–30; the sequence is MGTVSSRRSWWPLPLLLLLLLLLGPAGARA. Positions 31-152 are excised as a propeptide; sequence QEDEDGDYEE…IEEDSSVFAQ (122 aa). The residue at position 38 (tyrosine 38) is a Sulfotyrosine. Position 47 is a phosphoserine (serine 47). Residues 77-149 form the Inhibitor I9 domain; that stretch reads TYVVVLKEET…VDYIEEDSSV (73 aa). One can recognise a Peptidase S8 domain in the interval 155–461; it reads PWNLERITPP…GWQLFCRTVW (307 aa). Residues aspartate 186 and histidine 226 each act as charge relay system in the active site. 2 disulfide bridges follow: cysteine 223–cysteine 255 and cysteine 323–cysteine 358. Serine 386 functions as the Charge relay system in the catalytic mechanism. Residues 450 to 692 form a C-terminal domain region; that stretch reads GAGWQLFCRT…HLAQASQELQ (243 aa). Cystine bridges form between cysteine 457–cysteine 527, cysteine 477–cysteine 526, and cysteine 486–cysteine 509. Asparagine 533 is a glycosylation site (N-linked (GlcNAc...) asparagine). Cystine bridges form between cysteine 534–cysteine 601, cysteine 552–cysteine 600, cysteine 562–cysteine 588, cysteine 608–cysteine 679, cysteine 626–cysteine 678, and cysteine 635–cysteine 654. Serine 688 is subject to Phosphoserine.

This sequence belongs to the peptidase S8 family. As to quaternary structure, monomer. Can self-associate to form dimers and higher multimers which may have increased LDLR degrading activity. The precursor protein but not the mature protein may form multimers. Interacts with APOB, VLDLR, LRP8/APOER2 and BACE1. The full-length immature form (pro-PCSK9) interacts with SCNN1A, SCNN1B and SCNN1G. The pro-PCSK9 form (via C-terminal domain) interacts with LDLR. Interacts (via the C-terminal domain) with ANXA2 (via repeat Annexin 1); the interaction inhibits the degradation of LDLR. Requires Ca(2+) as cofactor. Cleavage by furin and PCSK5 generates a truncated inactive protein that is unable to induce LDLR degradation. In terms of processing, undergoes autocatalytic cleavage in the endoplasmic reticulum to release the propeptide from the N-terminus and the cleavage of the propeptide is strictly required for its maturation and activation. The cleaved propeptide however remains associated with the catalytic domain through non-covalent interactions, preventing potential substrates from accessing its active site. As a result, it is secreted from cells as a propeptide-containing, enzymatically inactive protein. Post-translationally, phosphorylation protects the propeptide against proteolysis.

It is found in the cytoplasm. Its subcellular location is the secreted. It localises to the endosome. The protein localises to the lysosome. The protein resides in the cell surface. It is found in the endoplasmic reticulum. Its subcellular location is the golgi apparatus. With respect to regulation, its proteolytic activity is autoinhibited by the non-covalent binding of the propeptide to the catalytic domain. Inhibited by EGTA. Its function is as follows. Crucial player in the regulation of plasma cholesterol homeostasis. Binds to low-density lipid receptor family members: low density lipoprotein receptor (LDLR), very low density lipoprotein receptor (VLDLR), apolipoprotein E receptor (LRP1/APOER) and apolipoprotein receptor 2 (LRP8/APOER2), and promotes their degradation in intracellular acidic compartments. Acts via a non-proteolytic mechanism to enhance the degradation of the hepatic LDLR through a clathrin LDLRAP1/ARH-mediated pathway. May prevent the recycling of LDLR from endosomes to the cell surface or direct it to lysosomes for degradation. Can induce ubiquitination of LDLR leading to its subsequent degradation. Inhibits intracellular degradation of APOB via the autophagosome/lysosome pathway in a LDLR-independent manner. Involved in the disposal of non-acetylated intermediates of BACE1 in the early secretory pathway. Inhibits epithelial Na(+) channel (ENaC)-mediated Na(+) absorption by reducing ENaC surface expression primarily by increasing its proteasomal degradation. Regulates neuronal apoptosis via modulation of LRP8/APOER2 levels and related anti-apoptotic signaling pathways. This chain is Proprotein convertase subtilisin/kexin type 9 (PCSK9), found in Pan troglodytes (Chimpanzee).